Consider the following 86-residue polypeptide: UPF0457 protein SAUSA300_2132 (86 aa).

It belongs to the UPF0457 family.

This Staphylococcus aureus (strain USA300) protein is UPF0457 protein SAUSA300_2132.